A 242-amino-acid chain; its full sequence is Uridylate kinase (242 aa).

Position 12–15 (12–15 (KLSG)) interacts with ATP. Residues 20–25 (GEKGYG) are involved in allosteric activation by GTP. Gly-55 serves as a coordination point for UMP. Positions 56 and 60 each coordinate ATP. UMP is bound by residues Asp-75 and 136 to 143 (TGNPYFST). Positions 169 and 172 each coordinate ATP.

The protein belongs to the UMP kinase family. Homohexamer.

Its subcellular location is the cytoplasm. The catalysed reaction is UMP + ATP = UDP + ADP. Its pathway is pyrimidine metabolism; CTP biosynthesis via de novo pathway; UDP from UMP (UMPK route): step 1/1. With respect to regulation, allosterically activated by GTP. Inhibited by UTP. Catalyzes the reversible phosphorylation of UMP to UDP. This Carboxydothermus hydrogenoformans (strain ATCC BAA-161 / DSM 6008 / Z-2901) protein is Uridylate kinase.